The chain runs to 277 residues: Digeranylgeranylglyceryl phosphate synthase (277 aa).

A run of 7 helical transmembrane segments spans residues 16–36 (ILAGVVGILGSLVAYEGIPSI), 40–60 (GLVFLVVYLGCSAGNTINDYF), 101–121 (FLGVEALLFALGAYALTFIYA), 129–149 (FIGNVAVALLTAATPIYGALG), 153–173 (VGLAGYLAICAFLVNVSREIM), 205–225 (IFGVLTVITSFLPVKVGIGLG), and 257–277 (LKIATFIAVISFLLGALTKGV).

This sequence belongs to the UbiA prenyltransferase family. DGGGP synthase subfamily. Mg(2+) serves as cofactor.

The protein localises to the cell membrane. It catalyses the reaction sn-3-O-(geranylgeranyl)glycerol 1-phosphate + (2E,6E,10E)-geranylgeranyl diphosphate = 2,3-bis-O-(geranylgeranyl)-sn-glycerol 1-phosphate + diphosphate. It functions in the pathway membrane lipid metabolism; glycerophospholipid metabolism. Prenyltransferase that catalyzes the transfer of the geranylgeranyl moiety of geranylgeranyl diphosphate (GGPP) to the C2 hydroxyl of (S)-3-O-geranylgeranylglyceryl phosphate (GGGP). This reaction is the second ether-bond-formation step in the biosynthesis of archaeal membrane lipids. The protein is Digeranylgeranylglyceryl phosphate synthase of Pyrococcus abyssi (strain GE5 / Orsay).